The following is a 203-amino-acid chain: Glycerol-3-phosphate acyltransferase (203 aa).

5 helical membrane passes run 5 to 25, 55 to 75, 84 to 104, 118 to 138, and 159 to 179; these read IYIA…GLIL, LAAA…IVAA, IAAN…LFPV, IGVL…MWLA, and IFLW…LTLL.

This sequence belongs to the PlsY family. In terms of assembly, probably interacts with PlsX.

The protein resides in the cell inner membrane. The catalysed reaction is an acyl phosphate + sn-glycerol 3-phosphate = a 1-acyl-sn-glycero-3-phosphate + phosphate. It functions in the pathway lipid metabolism; phospholipid metabolism. Its function is as follows. Catalyzes the transfer of an acyl group from acyl-phosphate (acyl-PO(4)) to glycerol-3-phosphate (G3P) to form lysophosphatidic acid (LPA). This enzyme utilizes acyl-phosphate as fatty acyl donor, but not acyl-CoA or acyl-ACP. The protein is Glycerol-3-phosphate acyltransferase of Rhodopseudomonas palustris (strain ATCC BAA-98 / CGA009).